The chain runs to 123 residues: Guanine nucleotide exchange factor MSS4 (123 aa).

Met-1 carries the N-acetylmethionine modification. Positions 9 to 123 (ELVSAEGRNR…YVALERVSHE (115 aa)) constitute an MSS4 domain. Residues Cys-23, Cys-26, Cys-94, and Cys-97 each contribute to the Zn(2+) site.

The protein belongs to the DSS4/MSS4 family. Interacts with RAB8A. As to expression, ubiquitous.

Its function is as follows. Guanine-nucleotide-releasing protein that acts on members of the SEC4/YPT1/RAB subfamily. Stimulates GDP release from both YPT1, RAB3A and RAB10, but is less active on these proteins than on the SEC4 protein. Might play a general role in vesicular transport. This chain is Guanine nucleotide exchange factor MSS4 (Rabif), found in Rattus norvegicus (Rat).